The primary structure comprises 714 residues: Phosphate acetyltransferase (714 aa).

The phosphate acetyltransferase stretch occupies residues 391–714 (AFRYQLTELA…LTAIQSAQQQ (324 aa)).

This sequence in the N-terminal section; belongs to the CobB/CobQ family. The protein in the C-terminal section; belongs to the phosphate acetyltransferase and butyryltransferase family. Homohexamer.

The protein resides in the cytoplasm. The enzyme catalyses acetyl-CoA + phosphate = acetyl phosphate + CoA. It functions in the pathway metabolic intermediate biosynthesis; acetyl-CoA biosynthesis; acetyl-CoA from acetate: step 2/2. With respect to regulation, inhibited by NADH and ATP. Pyruvate and PEP act as activators of the acetyl phosphate forming reaction while inhibiting the formation of acetyl-CoA. Functionally, involved in acetate metabolism. Catalyzes the reversible interconversion of acetyl-CoA and acetyl phosphate. The direction of the overall reaction changes depending on growth conditions. On minimal medium acetyl-CoA is generated. In rich medium acetyl-CoA is converted to acetate and allowing the cell to dump the excess of acetylation potential in exchange for energy in the form of ATP. The main pathway for acetate production during exponential phase. This Escherichia coli (strain K12) protein is Phosphate acetyltransferase (pta).